A 462-amino-acid polypeptide reads, in one-letter code: Violaxanthin de-epoxidase, chloroplastic (462 aa).

A disulfide bridge links Cys231 with Cys362. Positions 372-437 form a coiled coil; it reads IEKTVEEGER…RELSKEEMEF (66 aa). The segment at 380 to 391 is involved in the binding to the thylakoid membrane; the sequence is ERIIVKEVEEIE.

This sequence belongs to the calycin superfamily. Lipocalin family. Interacts in vitro with LTO1.

It is found in the plastid. The protein localises to the chloroplast thylakoid membrane. It carries out the reaction all-trans-violaxanthin + 2 L-ascorbate = all-trans-zeaxanthin + 2 L-dehydroascorbate + 2 H2O. Activity limited by low ascorbate availability. Feedback inhibition by zeaxanthin. Requires the presence of micelle-forming lipids such as monogalactosyldiacylglyceride (MGDG). Low concentration of bilayer forming lipids, such as digalactosyldiacylglyceride (DGDG) or phosphatidylcholine, supports a slower but nearly complete activity. 80% of the specific activity in lumenal chloroplast fractions is lost in vitro in the presence of reduced thioredoxin. In terms of biological role, part of the xanthophyll (or violaxanthin) cycle for controlling the concentration of zeaxanthin in chloroplasts. Catalyzes the two-step mono de-epoxidation reaction. Stereospecific for all-trans xanthophylls. Zeaxanthin induces the dissipation of excitation energy in the chlorophyll of the light-harvesting protein complex of photosystem II. The sequence is that of Violaxanthin de-epoxidase, chloroplastic from Arabidopsis thaliana (Mouse-ear cress).